A 139-amino-acid chain; its full sequence is Peptide methionine sulfoxide reductase MsrB (139 aa).

In terms of domain architecture, MsrB spans 8-130; it reads DREWQRELSP…NSASLQLKTQ (123 aa). Zn(2+) is bound by residues cysteine 47, cysteine 50, cysteine 96, and cysteine 99. Cysteine 119 (nucleophile) is an active-site residue.

Belongs to the MsrB Met sulfoxide reductase family. Requires Zn(2+) as cofactor.

It carries out the reaction L-methionyl-[protein] + [thioredoxin]-disulfide + H2O = L-methionyl-(R)-S-oxide-[protein] + [thioredoxin]-dithiol. The sequence is that of Peptide methionine sulfoxide reductase MsrB from Acinetobacter baumannii (strain SDF).